A 314-amino-acid polypeptide reads, in one-letter code: MASASSVSLMLLVAAAMASAASAQLSATFYDTSCPNALSTIKSAVTAAVNSEPRMGASLVRLHFHDCFVQGCDASVLLSGQEQNAGPNAGSLRGFNVVDNIKTQVEAICSQTVSCADILAVAARDSVVALGGPSWTVLLGRRDSTTANESQANTDLPAPSSSLAELIGNFSRKGLDVTDMVALSGAHTIGQAQCQNFRDRLYNETNIDSSFATALKANCPRPTGSGDSNLAPLDTTTPNAFDSAYYTNLLSNKGLLHSDQVLFNGGSTDNTVRNFSSNTAAFNSAFTAAMVKMGNISPLTGTQGQIRLNCSKVN.

The signal sequence occupies residues 1–23 (MASASSVSLMLLVAAAMASAASA). Q24 is subject to Pyrrolidone carboxylic acid. Intrachain disulfides connect C34/C109, C67/C72, C115/C310, and C194/C219. The active-site Proton acceptor is the H65. Ca(2+)-binding residues include D66, V69, G71, D73, and S75. N-linked (GlcNAc...) asparagine glycosylation occurs at N148. Position 157 (P157) interacts with substrate. N169 is a glycosylation site (N-linked (GlcNAc...) asparagine). Heme b is bound at residue H187. T188 lines the Ca(2+) pocket. An N-linked (GlcNAc...) asparagine glycan is attached at N203. Ca(2+) contacts are provided by D234, T237, and D242. Residues N274 and N309 are each glycosylated (N-linked (GlcNAc...) asparagine).

The protein belongs to the peroxidase family. Classical plant (class III) peroxidase subfamily. Requires Ca(2+) as cofactor. Heme b serves as cofactor.

It is found in the secreted. It carries out the reaction 2 a phenolic donor + H2O2 = 2 a phenolic radical donor + 2 H2O. Removal of H(2)O(2), oxidation of toxic reductants, biosynthesis and degradation of lignin, suberization, auxin catabolism, response to environmental stresses such as wounding, pathogen attack and oxidative stress. These functions might be dependent on each isozyme/isoform in each plant tissue. The chain is Peroxidase 2 (PRX112) from Oryza sativa subsp. japonica (Rice).